The chain runs to 89 residues: Cell division topological specificity factor (89 aa).

It belongs to the MinE family.

Functionally, prevents the cell division inhibition by proteins MinC and MinD at internal division sites while permitting inhibition at polar sites. This ensures cell division at the proper site by restricting the formation of a division septum at the midpoint of the long axis of the cell. This is Cell division topological specificity factor from Desulforudis audaxviator (strain MP104C).